The primary structure comprises 132 residues: UPF0299 membrane protein Ent638_2744 (132 aa).

The next 4 membrane-spanning stretches (helical) occupy residues 8–28 (VWQY…GIFI), 31–51 (LLPI…LLLA), 63–83 (GCFV…VGVM), and 93–113 (FGPI…VVSW).

It belongs to the UPF0299 family.

Its subcellular location is the cell inner membrane. The sequence is that of UPF0299 membrane protein Ent638_2744 from Enterobacter sp. (strain 638).